The sequence spans 159 residues: MNITIICVGKLKEKYLKLAIDEYSKRLSRYCKLNIVELNDEKTPDNASEKDELIIKQKEGSKILAHVKENMYVIALDLNGKMASSEELAELIGDLGLKGKSNIALVIGGSLGLSKEVLNRANYKLSFSKMTFPHQLMRVILLEQIYRAYKINAGEPYHK.

Residues Leu76, Gly108, and 127-132 contribute to the S-adenosyl-L-methionine site; that span reads FSKMTF.

The protein belongs to the RNA methyltransferase RlmH family. In terms of assembly, homodimer.

It localises to the cytoplasm. It carries out the reaction pseudouridine(1915) in 23S rRNA + S-adenosyl-L-methionine = N(3)-methylpseudouridine(1915) in 23S rRNA + S-adenosyl-L-homocysteine + H(+). Specifically methylates the pseudouridine at position 1915 (m3Psi1915) in 23S rRNA. This Clostridium novyi (strain NT) protein is Ribosomal RNA large subunit methyltransferase H.